Here is a 91-residue protein sequence, read N- to C-terminus: Cell division protein FtsB (91 aa).

At 1–3 (MRW) the chain is on the cytoplasmic side. Residues 4 to 21 (PVIILAVLVVVLQYPLWL) traverse the membrane as a helical segment. Topologically, residues 22-91 (GKGGWLRVWE…EIFVQVPQKH (70 aa)) are periplasmic. A coiled-coil region spans residues 28 to 72 (RVWEVDRKLHEQREENTRLEERNAGLDAEVRDLKSGNEAIEERAR).

The protein belongs to the FtsB family. In terms of assembly, part of a complex composed of FtsB, FtsL and FtsQ.

The protein resides in the cell inner membrane. In terms of biological role, essential cell division protein. May link together the upstream cell division proteins, which are predominantly cytoplasmic, with the downstream cell division proteins, which are predominantly periplasmic. In Azoarcus sp. (strain BH72), this protein is Cell division protein FtsB.